Here is a 401-residue protein sequence, read N- to C-terminus: ATP phosphoribosyltransferase regulatory subunit (401 aa).

A disordered region spans residues 373 to 401 (PGQQGGAAAQGCDRRLQQDDGGGWVTRPL). Gly residues predominate over residues 392–401 (DGGGWVTRPL).

It belongs to the class-II aminoacyl-tRNA synthetase family. HisZ subfamily. In terms of assembly, heteromultimer composed of HisG and HisZ subunits.

The protein localises to the cytoplasm. It functions in the pathway amino-acid biosynthesis; L-histidine biosynthesis; L-histidine from 5-phospho-alpha-D-ribose 1-diphosphate: step 1/9. Its function is as follows. Required for the first step of histidine biosynthesis. May allow the feedback regulation of ATP phosphoribosyltransferase activity by histidine. The chain is ATP phosphoribosyltransferase regulatory subunit from Alkalilimnicola ehrlichii (strain ATCC BAA-1101 / DSM 17681 / MLHE-1).